The primary structure comprises 282 residues: Digeranylgeranylglyceryl phosphate synthase (282 aa).

9 helical membrane passes run 15 to 35 (VIGAALGAIMGFLVSSQWYLE), 36 to 56 (LKGILLSALVVGLIAAGGYVI), 81 to 100 (VNKAKALSIALFIIGIALSI), 104 to 121 (IYALVIALVTAIGLIYYA), 131 to 151 (GNLLVATTTALSIFYGGLAFF), 159 to 179 (IIIPTLYAFFLTLIREIVKGI), 201 to 221 (KSWRIAKILLVLLLIISPLPF), 222 to 242 (FIGFNLIYLILLILVFIPFTI), and 260 to 280 (YLKISAISGIIAFLLGSLPFF).

The protein belongs to the UbiA prenyltransferase family. DGGGP synthase subfamily. Mg(2+) serves as cofactor. Requires Ca(2+) as cofactor.

It is found in the cell membrane. It carries out the reaction sn-3-O-(geranylgeranyl)glycerol 1-phosphate + (2E,6E,10E)-geranylgeranyl diphosphate = 2,3-bis-O-(geranylgeranyl)-sn-glycerol 1-phosphate + diphosphate. The protein operates within membrane lipid metabolism; glycerophospholipid metabolism. With respect to regulation, inhibited by EDTA in vitro. Functionally, prenyltransferase that catalyzes the transfer of the geranylgeranyl moiety of geranylgeranyl diphosphate (GGPP) to the C2 hydroxyl of (S)-3-O-geranylgeranylglyceryl phosphate (GGGP). This reaction is the second ether-bond-formation step in the biosynthesis of archaeal membrane lipids. Cannot use other prenyl donors, i.e. farnesyl diphosphate (FPP) and phytyl diphosphate. Moreover, 4-hydroxybenzoate, 1,4-dihydroxy 2-naphthoate, homogentisate, and alpha-glycerophosphate do not function as prenyl acceptor substrates. This Saccharolobus solfataricus (strain ATCC 35092 / DSM 1617 / JCM 11322 / P2) (Sulfolobus solfataricus) protein is Digeranylgeranylglyceryl phosphate synthase (ubiA-2).